A 302-amino-acid polypeptide reads, in one-letter code: MAAAEAAAAVGKQQQKGGGGRGGGGGGPAPFLTKTNQMVEESATDEVISWGKEGRSFVVWKPVEFARDLLPLHFKHCNFSSFVRQLNTYGFRKVVPDRWEFANGNFRRGEQGLLSGIRRRKATTPQSSKSCGSGVNVAFPPPLPPLPPEPSATTSSGNDRSSSSASSPPRADITSENEQLRKDNQTLTMELARARRHCEELLGFLSRFLDVRQLDLRLLMQEDMRAAAGGVGGEQRVQEHAREEKCVKLFGVLLDDTHGAATRKRARCEEAAASERPIKMIRIGEPWVSVPSSGPARCGGDN.

Positions 1 to 15 are enriched in low complexity; sequence MAAAEAAAAVGKQQQ. Disordered stretches follow at residues 1–33 and 116–184; these read MAAAEAAAAVGKQQQKGGGGRGGGGGGPAPFLT and GIRR…RKDN. The span at 16–28 shows a compositional bias: gly residues; it reads KGGGGRGGGGGGP. Positions 123–133 are enriched in polar residues; that stretch reads TTPQSSKSCGS. Positions 139 to 150 are enriched in pro residues; it reads FPPPLPPLPPEP. Over residues 151 to 172 the composition is skewed to low complexity; the sequence is SATTSSGNDRSSSSASSPPRAD. Positions 170-202 form a coiled coil; sequence RADITSENEQLRKDNQTLTMELARARRHCEELL. The segment at 180-209 is hydrophobic repeat HR-A/B; the sequence is LRKDNQTLTMELARARRHCEELLGFLSRFL. The short motif at 211-218 is the Nuclear export signal element; that stretch reads VRQLDLRL. The Nuclear localization signal signature appears at 263–267; sequence RKRAR.

The protein belongs to the HSF family. Class B subfamily. In terms of assembly, homotrimer. In terms of processing, exhibits temperature-dependent phosphorylation.

It localises to the cytoplasm. The protein resides in the nucleus. Its function is as follows. Transcriptional regulator that specifically binds DNA of heat shock promoter elements (HSE). The polypeptide is Heat stress transcription factor B-1 (HSFB1) (Oryza sativa subsp. japonica (Rice)).